The following is a 421-amino-acid chain: NADH-quinone oxidoreductase subunit F 2 (421 aa).

53-62 (GRGGAGFPTG) contributes to the NAD(+) binding site. Position 165 to 212 (165 to 212 (GAGAYICGEETAMLESLEGKRAQPRLKPPFPAVAGLYASPTVINNVET)) interacts with FMN. Cysteine 342, cysteine 345, cysteine 348, and cysteine 388 together coordinate [4Fe-4S] cluster.

This sequence belongs to the complex I 51 kDa subunit family. FMN serves as cofactor. [4Fe-4S] cluster is required as a cofactor.

The catalysed reaction is a quinone + NADH + 5 H(+)(in) = a quinol + NAD(+) + 4 H(+)(out). NDH-1 shuttles electrons from NADH, via FMN and iron-sulfur (Fe-S) centers, to quinones in the respiratory chain. The immediate electron acceptor for the enzyme in this species is believed to be ubiquinone. Couples the redox reaction to proton translocation (for every two electrons transferred, four hydrogen ions are translocated across the cytoplasmic membrane), and thus conserves the redox energy in a proton gradient. The sequence is that of NADH-quinone oxidoreductase subunit F 2 (nuoF2) from Rhizobium meliloti (strain 1021) (Ensifer meliloti).